The sequence spans 501 residues: MATRINYNYEAAVTYTTLKQNERLMNKSLLRLSTGLRILSAADDASGLFIADQLSLVSTGLQQGNRNIQFAISALQIAEGGVAQIYDKLKTMYQKAVSAANDINDPNARAALQRDIENLRDAIQKIAQDTEYNGIRLLDGTLKNGIYIHYGARSEQKLSVAIDDVRASNLGAYLLDLKGQSNSAYDSFANLLTTDTNFDIASTETISIAGVTHSPPTNIVTDARYIADWINGDPTLQQMGIKAKASNRVVGDPWVNVAVDTGDSLTIKFYVGTSTTPAITLTYGPGKTITLDRIISDINSKATGLNLVAKEENGRLVIETSGETVGVEVSKSGTGGTTFSLDQIISGVNKTVNNTNTQASAIKVGDLRIIDDESYTYDFTGIAGAFGLTSPSGTVGITDLYAIDVTTNEGAELAMDILTIAAQKVDEIRSQIGSTIINLQAIYDAKAVAKDNTDNAENIIRNVDFAKEMTEFTKYQIRMQSGIAMLAQANALPQLVLQLLR.

The protein belongs to the bacterial flagellin family.

The protein localises to the secreted. It is found in the bacterial flagellum. Functionally, flagellin is the subunit protein which polymerizes to form the filaments of bacterial flagella. This chain is Flagellin (flaA), found in Aquifex pyrophilus.